Consider the following 173-residue polypeptide: NADH-ubiquinone oxidoreductase chain 6 (173 aa).

The next 6 membrane-spanning stretches (helical) occupy residues 1-21 (MIYF…AVAS), 27-47 (FAAL…VGYG), 53-73 (LVLF…SAAL), 82-102 (WGSW…LLVG), 106-126 (YGWW…MSVL), and 141-161 (GFLL…VLEI).

The protein belongs to the complex I subunit 6 family.

The protein localises to the mitochondrion membrane. The catalysed reaction is a ubiquinone + NADH + 5 H(+)(in) = a ubiquinol + NAD(+) + 4 H(+)(out). Its function is as follows. Core subunit of the mitochondrial membrane respiratory chain NADH dehydrogenase (Complex I) that is believed to belong to the minimal assembly required for catalysis. Complex I functions in the transfer of electrons from NADH to the respiratory chain. The immediate electron acceptor for the enzyme is believed to be ubiquinone. This chain is NADH-ubiquinone oxidoreductase chain 6 (MT-ND6), found in Latimeria chalumnae (Coelacanth).